The primary structure comprises 374 residues: Chaperone protein DnaJ (374 aa).

The J domain maps to 5–70 (DYYEVLGVAK…QKRAAYDRYG (66 aa)). Residues 134–212 (GFDTEIRVPS…CDGVGRIRRN (79 aa)) form a CR-type zinc finger. Zn(2+) contacts are provided by Cys-147, Cys-150, Cys-164, Cys-167, Cys-186, Cys-189, Cys-200, and Cys-203. CXXCXGXG motif repeat units lie at residues 147–154 (CDTCHGSG), 164–171 (CRTCGGSG), 186–193 (CPTCHGTG), and 200–207 (CPSCDGVG).

The protein belongs to the DnaJ family. In terms of assembly, homodimer. It depends on Zn(2+) as a cofactor.

The protein localises to the cytoplasm. Functionally, participates actively in the response to hyperosmotic and heat shock by preventing the aggregation of stress-denatured proteins and by disaggregating proteins, also in an autonomous, DnaK-independent fashion. Unfolded proteins bind initially to DnaJ; upon interaction with the DnaJ-bound protein, DnaK hydrolyzes its bound ATP, resulting in the formation of a stable complex. GrpE releases ADP from DnaK; ATP binding to DnaK triggers the release of the substrate protein, thus completing the reaction cycle. Several rounds of ATP-dependent interactions between DnaJ, DnaK and GrpE are required for fully efficient folding. Also involved, together with DnaK and GrpE, in the DNA replication of plasmids through activation of initiation proteins. This Bordetella petrii (strain ATCC BAA-461 / DSM 12804 / CCUG 43448) protein is Chaperone protein DnaJ.